A 243-amino-acid chain; its full sequence is I/6 autoantigen (243 aa).

An EF-hand domain is found at 110 to 145 (LSVEEVDALFNALDSDNRGYVSVDEFMDALYGEEGR). The segment at 166 to 243 (PSWRMRPTPK…PPKQKAGCGC (78 aa)) is disordered. Basic residues predominate over residues 176-196 (PTRKLRQKRKREQGQKRKQGQ). 6 tandem repeats follow at residues 181–188 (RQKRKREQ), 189–196 (GQKRKQGQ), 197–204 (RQKQEQGQ), 205–212 (RQKREQGQ), 213–220 (RQKQEQGQ), and 221–228 (KRKRERGG). The interval 181-228 (RQKRKREQGQKRKQGQRQKQEQGQRQKREQGQRQKQEQGQKRKRERGG) is 6 X 8 AA tandem repeats. The span at 198–220 (QKQEQGQRQKREQGQRQKQEQGQ) shows a compositional bias: basic and acidic residues.

It localises to the cytoplasm. The protein localises to the cytoskeleton. Functionally, microtubule-associated protein that may be involved in cross-linking microtubules. This is I/6 autoantigen from Trypanosoma brucei brucei.